Here is a 158-residue protein sequence, read N- to C-terminus: Large ribosomal subunit protein uL18 (158 aa).

The protein belongs to the universal ribosomal protein uL18 family. As to quaternary structure, part of the 50S ribosomal subunit. Contacts the 5S and 23S rRNAs.

Its function is as follows. This is one of the proteins that bind and probably mediate the attachment of the 5S RNA into the large ribosomal subunit, where it forms part of the central protuberance. The protein is Large ribosomal subunit protein uL18 of Picrophilus torridus (strain ATCC 700027 / DSM 9790 / JCM 10055 / NBRC 100828 / KAW 2/3).